We begin with the raw amino-acid sequence, 159 residues long: Cyclic pyranopterin monophosphate synthase (159 aa).

Substrate is bound by residues 75 to 77 (LCH) and 113 to 114 (ME). D128 is an active-site residue.

This sequence belongs to the MoaC family. As to quaternary structure, homohexamer; trimer of dimers.

It catalyses the reaction (8S)-3',8-cyclo-7,8-dihydroguanosine 5'-triphosphate = cyclic pyranopterin phosphate + diphosphate. It functions in the pathway cofactor biosynthesis; molybdopterin biosynthesis. Catalyzes the conversion of (8S)-3',8-cyclo-7,8-dihydroguanosine 5'-triphosphate to cyclic pyranopterin monophosphate (cPMP). The chain is Cyclic pyranopterin monophosphate synthase from Yersinia pseudotuberculosis serotype O:1b (strain IP 31758).